The following is a 472-amino-acid chain: 3-isopropylmalate dehydratase large subunit (472 aa).

Residues cysteine 347, cysteine 407, and cysteine 410 each coordinate [4Fe-4S] cluster.

Belongs to the aconitase/IPM isomerase family. LeuC type 1 subfamily. Heterodimer of LeuC and LeuD. Requires [4Fe-4S] cluster as cofactor.

The catalysed reaction is (2R,3S)-3-isopropylmalate = (2S)-2-isopropylmalate. Its pathway is amino-acid biosynthesis; L-leucine biosynthesis; L-leucine from 3-methyl-2-oxobutanoate: step 2/4. Catalyzes the isomerization between 2-isopropylmalate and 3-isopropylmalate, via the formation of 2-isopropylmaleate. The polypeptide is 3-isopropylmalate dehydratase large subunit (Parasynechococcus marenigrum (strain WH8102)).